We begin with the raw amino-acid sequence, 508 residues long: Adenosine deaminase (508 aa).

The first 18 residues, 1–18 (MFSQLVVWLLATSTVCLA), serve as a signal peptide directing secretion.

The protein belongs to the metallo-dependent hydrolases superfamily. Adenosine and AMP deaminases family. ADGF subfamily. Zn(2+) is required as a cofactor. Salivary gland (at protein level).

The protein localises to the secreted. It catalyses the reaction adenosine + H2O + H(+) = inosine + NH4(+). Catalyzes the deamination of adenosine to inosine. This Lutzomyia longipalpis (Sand fly) protein is Adenosine deaminase.